The following is a 944-amino-acid chain: Neutral alpha-glucosidase AB (944 aa).

Positions 1–32 are cleaved as a signal peptide; that stretch reads MAAVAAVAARRRRSWTGLVLACLGVCLGLTLA. Cys41 and Cys47 form a disulfide bridge. Ser52 is modified (phosphoserine). N-linked (GlcNAc...) asparagine glycosylation occurs at Asn97. The tract at residues 181–225 is disordered; sequence QRAPRVSQGSKDPAEGDGAQPEEAPGDGDKPEEIQGKAEKDEPGA. Residues 207-225 show a composition bias toward basic and acidic residues; the sequence is DGDKPEEIQGKAEKDEPGA. 2 residues coordinate substrate: Asp283 and Asp429. Asp542 (nucleophile) is an active-site residue. Position 602 (Arg602) interacts with substrate. The Proton donor role is filled by Asp618. Cys633 and Cys644 are oxidised to a cystine. His676 provides a ligand contact to substrate.

This sequence belongs to the glycosyl hydrolase 31 family. As to quaternary structure, heterodimer of a catalytic alpha subunit (GANAB) and a beta subunit (PRKCSH). Binds glycosylated PTPRC. Contains sialylated polysaccharide chains.

The protein resides in the endoplasmic reticulum. It localises to the golgi apparatus. It is found in the melanosome. The catalysed reaction is N(4)-(alpha-D-Glc-(1-&gt;3)-alpha-D-Man-(1-&gt;2)-alpha-D-Man-(1-&gt;2)-alpha-D-Man-(1-&gt;3)-[alpha-D-Man-(1-&gt;2)-alpha-D-Man-(1-&gt;3)-[alpha-D-Man-(1-&gt;2)-alpha-D-Man-(1-&gt;6)]-alpha-D-Man-(1-&gt;6)]-beta-D-Man-(1-&gt;4)-beta-D-GlcNAc-(1-&gt;4)-beta-D-GlcNAc)-L-asparaginyl-[protein] + H2O = N(4)-(alpha-D-Man-(1-&gt;2)-alpha-D-Man-(1-&gt;2)-alpha-D-Man-(1-&gt;3)-[alpha-D-Man-(1-&gt;2)-alpha-D-Man-(1-&gt;3)-[alpha-D-Man-(1-&gt;2)-alpha-D-Man-(1-&gt;6)]-alpha-D-Man-(1-&gt;6)]-beta-D-Man-(1-&gt;4)-beta-D-GlcNAc-(1-&gt;4)-beta-D-GlcNAc)-L-asparaginyl-[protein] (N-glucan mannose isomer 9A1,2,3B1,2,3) + beta-D-glucose. It catalyses the reaction N(4)-(alpha-D-Glc-(1-&gt;3)-alpha-D-Glc-(1-&gt;3)-alpha-D-Man-(1-&gt;2)-alpha-D-Man-(1-&gt;2)-alpha-D-Man-(1-&gt;3)-[alpha-D-Man-(1-&gt;2)-alpha-D-Man-(1-&gt;3)-[alpha-D-Man-(1-&gt;2)-alpha-D-Man-(1-&gt;6)]-alpha-D-Man-(1-&gt;6)]-beta-D-Man-(1-&gt;4)-beta-D-GlcNAc-(1-&gt;4)-beta-D-GlcNAc)-L-asparaginyl-[protein] + H2O = N(4)-(alpha-D-Glc-(1-&gt;3)-alpha-D-Man-(1-&gt;2)-alpha-D-Man-(1-&gt;2)-alpha-D-Man-(1-&gt;3)-[alpha-D-Man-(1-&gt;2)-alpha-D-Man-(1-&gt;3)-[alpha-D-Man-(1-&gt;2)-alpha-D-Man-(1-&gt;6)]-alpha-D-Man-(1-&gt;6)]-beta-D-Man-(1-&gt;4)-beta-D-GlcNAc-(1-&gt;4)-beta-D-GlcNAc)-L-asparaginyl-[protein] + beta-D-glucose. Its pathway is glycan metabolism; N-glycan metabolism. Its function is as follows. Catalytic subunit of glucosidase II that cleaves sequentially the 2 innermost alpha-1,3-linked glucose residues from the Glc(2)Man(9)GlcNAc(2) oligosaccharide precursor of immature glycoproteins. Required for PKD1/Polycystin-1 and PKD2/Polycystin-2 maturation and localization to the cell surface and cilia. In Sus scrofa (Pig), this protein is Neutral alpha-glucosidase AB (GANAB).